A 444-amino-acid polypeptide reads, in one-letter code: Phosphoglucosamine mutase (444 aa).

The active-site Phosphoserine intermediate is the Ser-103. 4 residues coordinate Mg(2+): Ser-103, Asp-241, Asp-243, and Asp-245. Residue Ser-103 is modified to Phosphoserine.

Belongs to the phosphohexose mutase family. It depends on Mg(2+) as a cofactor. Activated by phosphorylation.

It catalyses the reaction alpha-D-glucosamine 1-phosphate = D-glucosamine 6-phosphate. Its function is as follows. Catalyzes the conversion of glucosamine-6-phosphate to glucosamine-1-phosphate. This chain is Phosphoglucosamine mutase, found in Deinococcus geothermalis (strain DSM 11300 / CIP 105573 / AG-3a).